A 591-amino-acid polypeptide reads, in one-letter code: L-fucose isomerase (591 aa).

Catalysis depends on proton acceptor residues Glu337 and Asp361. Mn(2+) is bound by residues Glu337, Asp361, and His528.

The protein belongs to the L-fucose isomerase family. As to quaternary structure, homohexamer. Requires Mn(2+) as cofactor.

Its subcellular location is the cytoplasm. The enzyme catalyses L-fucose = L-fuculose. The protein operates within carbohydrate degradation; L-fucose degradation; L-lactaldehyde and glycerone phosphate from L-fucose: step 1/3. Functionally, converts the aldose L-fucose into the corresponding ketose L-fuculose. The chain is L-fucose isomerase from Escherichia coli O6:K15:H31 (strain 536 / UPEC).